The sequence spans 43 residues: Hainantoxin F5-22.36 (43 aa).

3 disulfides stabilise this stretch: C1/C19, C8/C24, and C18/C38.

This sequence belongs to the neurotoxin 14 (magi-1) family. 02 (HWTX-XVIc) subfamily. As to expression, expressed by the venom gland.

It localises to the secreted. Its function is as follows. Probable ion channel inhibitor. In Cyriopagopus hainanus (Chinese bird spider), this protein is Hainantoxin F5-22.36.